We begin with the raw amino-acid sequence, 231 residues long: Cytochrome c oxidase assembly factor 7A (231 aa).

Sel1-like repeat units lie at residues 34–66 (PDGC…DQNE), 68–104 (SESF…NKGG), 108–145 (IDSC…DGNF), 146–182 (AASC…SLGH), and 183–218 (VWGC…DLHK).

Belongs to the hcp beta-lactamase family.

It is found in the mitochondrion intermembrane space. Functionally, may be required for assembly of mitochondrial respiratory chain complexes. The polypeptide is Cytochrome c oxidase assembly factor 7A (coa7-a) (Xenopus laevis (African clawed frog)).